We begin with the raw amino-acid sequence, 1177 residues long: DNA-directed RNA polymerase subunit beta (1177 aa).

The segment at 1154–1177 (RDTEDDDDHQSADKLNVEVETTKE) is disordered. The segment covering 1162–1177 (HQSADKLNVEVETTKE) has biased composition (basic and acidic residues).

The protein belongs to the RNA polymerase beta chain family. As to quaternary structure, the RNAP catalytic core consists of 2 alpha, 1 beta, 1 beta' and 1 omega subunit. When a sigma factor is associated with the core the holoenzyme is formed, which can initiate transcription.

The catalysed reaction is RNA(n) + a ribonucleoside 5'-triphosphate = RNA(n+1) + diphosphate. Functionally, DNA-dependent RNA polymerase catalyzes the transcription of DNA into RNA using the four ribonucleoside triphosphates as substrates. This is DNA-directed RNA polymerase subunit beta from Bacillus mycoides (strain KBAB4) (Bacillus weihenstephanensis).